Consider the following 469-residue polypeptide: 3-isopropylmalate dehydratase large subunit (469 aa).

Residues Cys347, Cys408, and Cys411 each coordinate [4Fe-4S] cluster.

The protein belongs to the aconitase/IPM isomerase family. LeuC type 1 subfamily. Heterodimer of LeuC and LeuD. Requires [4Fe-4S] cluster as cofactor.

The enzyme catalyses (2R,3S)-3-isopropylmalate = (2S)-2-isopropylmalate. The protein operates within amino-acid biosynthesis; L-leucine biosynthesis; L-leucine from 3-methyl-2-oxobutanoate: step 2/4. Its function is as follows. Catalyzes the isomerization between 2-isopropylmalate and 3-isopropylmalate, via the formation of 2-isopropylmaleate. This chain is 3-isopropylmalate dehydratase large subunit, found in Haemophilus influenzae (strain ATCC 51907 / DSM 11121 / KW20 / Rd).